The sequence spans 192 residues: A-type ATP synthase subunit E (192 aa).

Residues 1–66 (MSLDTVVEDI…QERDQKLSSA (66 aa)) are disordered. The span at 8–26 (EDIRDEARARADEIRSEGE) shows a compositional bias: basic and acidic residues. Residues 27–49 (ERAEEIIDEAEREADDIVDEAER) show a composition bias toward acidic residues. A compositionally biased stretch (basic and acidic residues) spans 50 to 66 (EAERKISQERDQKLSSA).

The protein belongs to the V-ATPase E subunit family. In terms of assembly, has multiple subunits with at least A(3), B(3), C, D, E, F, H, I and proteolipid K(x).

It is found in the cell membrane. Component of the A-type ATP synthase that produces ATP from ADP in the presence of a proton gradient across the membrane. The protein is A-type ATP synthase subunit E of Natronomonas pharaonis (strain ATCC 35678 / DSM 2160 / CIP 103997 / JCM 8858 / NBRC 14720 / NCIMB 2260 / Gabara) (Halobacterium pharaonis).